The primary structure comprises 384 residues: MFEPIELTSDAVIRVVGIGGGGGNAVEHMVRECIEGVDFFAVNTDAQALRKTEVSQTVQIGSSITKGLGAGANPEVGKNSAEEDKDALRIILDGADMVFIASGMGGGTGTGAAPVIAEIAKDLGILTVAVVTKPFNFEGKKRLIFAEQGIDELSKHVDSLIIIPNDKLLKVLGKGISLLDAFSAANDVLKNAVQGIAELITRPGLINVDFADVKTVMSEMGYAMMGSGISKGDNRAEESSEIAISSPLLEDIDLSGARGVLVNITAGFDLRLDEFEAVGNKVRSFSSDNATVVIGTSLDPSMNDELRVTVVATGIGMDKRPDIKLVTNSTSNKNIMDRFGYRYSDKENTMSKNNNEFSKIKNKTKEDLQSDYLEIPAFLRNQAD.

GTP contacts are provided by residues 20 to 24 (GGGGN), 107 to 109 (GTG), Glu-138, Arg-142, and Asn-186.

Belongs to the FtsZ family. Homodimer. Polymerizes to form a dynamic ring structure in a strictly GTP-dependent manner. Interacts directly with several other division proteins.

The protein localises to the cytoplasm. Its function is as follows. Essential cell division protein that forms a contractile ring structure (Z ring) at the future cell division site. The regulation of the ring assembly controls the timing and the location of cell division. One of the functions of the FtsZ ring is to recruit other cell division proteins to the septum to produce a new cell wall between the dividing cells. Binds GTP and shows GTPase activity. This is Cell division protein FtsZ from Wigglesworthia glossinidia brevipalpis.